The sequence spans 150 residues: Ribonuclease H (150 aa).

The region spanning 3–144 is the RNase H type-1 domain; sequence DKDMIEIWTD…ADGLARKGTD (142 aa). Mg(2+) is bound by residues D12, E50, D72, and D136. Positions 129-150 are disordered; the sequence is DEGNERADGLARKGTDEVRGRK.

Belongs to the RNase H family. As to quaternary structure, monomer. Mg(2+) is required as a cofactor.

The protein localises to the cytoplasm. The enzyme catalyses Endonucleolytic cleavage to 5'-phosphomonoester.. Its function is as follows. Endonuclease that specifically degrades the RNA of RNA-DNA hybrids. The protein is Ribonuclease H of Hyphomonas neptunium (strain ATCC 15444).